Consider the following 255-residue polypeptide: Biotin carboxyl carrier protein of acetyl-CoA carboxylase 2, chloroplastic (255 aa).

The N-terminal 87 residues, 1–87 (MASLSVPCVK…TNVPEPAELS (87 aa)), are a transit peptide targeting the chloroplast. Residues 148–193 (PPAQPVALPPSPTPTSTPATAKPTSAPSSSHPPLKSPMAGTFYRSP) are disordered. Residues 149–162 (PAQPVALPPSPTPT) are compositionally biased toward pro residues. A compositionally biased stretch (low complexity) spans 163 to 180 (STPATAKPTSAPSSSHPP). The Biotinyl-binding domain maps to 178–254 (HPPLKSPMAG…SVDTPLFVIA (77 aa)). N6-biotinyllysine is present on Lys220.

Acetyl-CoA carboxylase is a heterohexamer composed of biotin carboxyl carrier protein, biotin carboxylase and 2 subunits each of ACCase subunit alpha and ACCase plastid-coded subunit beta (accD). Primarily expressed in 7 to 10 days after flowering seeds at levels approximately 2-fold less abundant than BCCP1.

It is found in the plastid. Its subcellular location is the chloroplast. It functions in the pathway lipid metabolism; fatty acid biosynthesis. This protein is a component of the acetyl coenzyme A carboxylase complex; first, biotin carboxylase catalyzes the carboxylation of the carrier protein and then the transcarboxylase transfers the carboxyl group to form malonyl-CoA. This is Biotin carboxyl carrier protein of acetyl-CoA carboxylase 2, chloroplastic (BCCP2) from Arabidopsis thaliana (Mouse-ear cress).